The chain runs to 150 residues: Troponin C, isoform 1 (150 aa).

Position 1 is an N-acetylmethionine (Met1). EF-hand domains follow at residues 7-42, 43-78, 83-118, and 119-150; these read DQVQ…MGVK, ISDR…FLSE, ALKK…LDNK, and LTED…MMNG. Ca(2+) is bound by residues Asp56, Asp58, Ser60, Glu62, and Glu67. The Ca(2+) site is built by Asp132, Asp134, Ser136, Thr138, and Glu143.

Belongs to the troponin C family.

Troponin is the central regulatory protein of striated muscle contraction. Tn consists of three components: Tn-I which is the inhibitor of actomyosin ATPase, Tn-T which contains the binding site for tropomyosin and Tn-C. The binding of calcium to Tn-C abolishes the inhibitory action of Tn on actin filaments. The chain is Troponin C, isoform 1 from Homarus americanus (American lobster).